Here is a 687-residue protein sequence, read N- to C-terminus: Putative lipase YDR444W (687 aa).

The active-site Charge relay system is the Ser284. 3 disordered regions span residues 429–472, 491–513, and 650–687; these read IRKK…AESP, KINKYKRGQTNEANSDSDNEQGV, and ELAEDANEPKDEPNQSSQADRSNEYNEGEISKGAENAT. Low complexity predominate over residues 436–463; it reads SPTSSEFVSSDSPESSGASSPSNENGNN. Over residues 670–681 the composition is skewed to basic and acidic residues; sequence RSNEYNEGEISK.

The protein belongs to the putative lipase ROG1 family.

It localises to the cytoplasm. The protein is Putative lipase YDR444W of Saccharomyces cerevisiae (strain ATCC 204508 / S288c) (Baker's yeast).